The sequence spans 1609 residues: Factor-induced gene 2 protein (1609 aa).

The signal sequence occupies residues 1 to 22 (MNSFASLGLIYSVVNLLTRVEA). A glycan (N-linked (GlcNAc...) asparagine) is linked at Asn-29. 3 disordered regions span residues 129–165 (SSTL…SSTS), 196–243 (SSEI…EPLS), and 266–312 (TIPT…NYDV). Residues 137–148 (QPHRTSHSSSSF) are compositionally biased toward polar residues. Residues 150–165 (LPVTAPSSSSLPSSTS) are compositionally biased toward low complexity. The segment covering 196–212 (SSEISGSTSPKSLESFD) has biased composition (polar residues). Low complexity-rich tracts occupy residues 213–243 (TTGT…EPLS) and 274–285 (TSSLPPTLRSSS). Asn-231 carries an N-linked (GlcNAc...) asparagine glycan. Positions 286-312 (MAPTSGSDSISHNFTSPPSKTSGNYDV) are enriched in polar residues. 9 N-linked (GlcNAc...) asparagine glycosylation sites follow: Asn-298, Asn-347, Asn-386, Asn-426, Asn-495, Asn-535, Asn-661, Asn-674, and Asn-713. The segment at 846-876 (ATSEATSTSTQVSATSATATASESSTTSQVS) is disordered. Asn-889, Asn-907, and Asn-1079 each carry an N-linked (GlcNAc...) asparagine glycan. The segment covering 1231 to 1243 (CTQDVPTQSSSPA) has biased composition (polar residues). Positions 1231-1259 (CTQDVPTQSSSPASTLAYSPSVSTSSSSS) are disordered. Residues 1244–1259 (STLAYSPSVSTSSSSS) are compositionally biased toward low complexity. The N-linked (GlcNAc...) asparagine glycan is linked to Asn-1400. The GPI-anchor amidated glycine moiety is linked to residue Gly-1588. Positions 1589–1609 (SASKFLCSKFFMIMVMVINFI) are cleaved as a propeptide — removed in mature form.

Post-translationally, N-glycosylated.

Its subcellular location is the secreted. The protein resides in the cell wall. It is found in the membrane. In terms of biological role, required for efficient mating. Plays a role in maintenance of cell wall integrity during mating. Important for mating cell projection shape and conjugation bridge diameter. Plays a role in cell fusion and nuclear migration. This Saccharomyces cerevisiae (strain ATCC 204508 / S288c) (Baker's yeast) protein is Factor-induced gene 2 protein (FIG2).